Here is a 110-residue protein sequence, read N- to C-terminus: Eukaryotic translation initiation factor eIF1 (110 aa).

Thr40 bears the Phosphothreonine mark.

Belongs to the SUI1 family.

Its function is as follows. Probably involved in translation. The protein is Eukaryotic translation initiation factor eIF1 of Drosophila melanogaster (Fruit fly).